A 252-amino-acid polypeptide reads, in one-letter code: Ciliogenesis and planar polarity effector 2 (252 aa).

Residues 46–252 are small GTPase-like; that stretch reads QMNVDLVRYK…LRETSSEIIV (207 aa). GTP is bound by residues 62-67 and 173-176; these read TGVGKS and TKFD.

It belongs to the small GTPase superfamily. Rab family.

Its subcellular location is the cytoplasm. It localises to the cytoskeleton. The protein localises to the cilium basal body. Its function is as follows. Potential effector of the planar cell polarity signaling pathway. Plays a role in targeted membrane trafficking most probably at the level of vesicle fusion with membranes. Involved in cilium biogenesis by regulating the transport of cargo proteins to the basal body and to the apical tips of cilia. More generally involved in exocytosis in secretory cells. The chain is Ciliogenesis and planar polarity effector 2 (cplane2) from Danio rerio (Zebrafish).